A 611-amino-acid polypeptide reads, in one-letter code: POU domain, class 6, transcription factor 1 (611 aa).

Positions 62-93 (ASQAAGEAGPDNLGSSAEATVKSPPGIPPSPA) are disordered. In terms of domain architecture, POU-specific spans 449 to 523 (EDGINLEEIR…VLEKWLNEAE (75 aa)). A DNA-binding region (homeobox) is located at residues 544-603 (KRKRRTSFTPQAIEALNAYFEKNPLPTGQEITEIAKELNYDREVVRVWFCNRRQTLKNTS).

This sequence belongs to the POU transcription factor family. Class-6 subfamily. In terms of tissue distribution, in the embryo, expressed exclusively in the developing brain, whereas in the adult its expression is restricted to brain, heart, skeletal muscle and lung. In the brain, the highest expression levels are found in specific cell layers of the cortex, the olfactory bulb, the hippocampus and the cerebellum.

It is found in the nucleus. Its function is as follows. Transcription factor that binds preferentially to a variant of the octamer motif (5'-ATGATAAT-3'). The protein is POU domain, class 6, transcription factor 1 (POU6F1) of Homo sapiens (Human).